Reading from the N-terminus, the 106-residue chain is Iron-sulfur cluster assembly protein CyaY (106 aa).

The protein belongs to the frataxin family.

Its function is as follows. Involved in iron-sulfur (Fe-S) cluster assembly. May act as a regulator of Fe-S biogenesis. In Shigella flexneri, this protein is Iron-sulfur cluster assembly protein CyaY.